A 429-amino-acid polypeptide reads, in one-letter code: METTQTSTIASKDSRSAWRKTDTMWMLGLYGTAIGAGVLFLPINAGVGGMIPLIIMAILAFPMTFFAHRGLTRFVLSGKNPGEDITEVVEEHFGIGAGKLITLLYFFAIYPILLVYSVAITNTVESFMSHQLGMTPPPRAILSLILIVGMMTIVRFGEQMIVKAMSILVFPFVGVLMLLALYLIPQWNGAALETLSLDTASATGNGLWMTLWLAIPVMVFSFNHSPIISSFAVANREEYGDMAEQKCSKILAFAHIMMVLTEMIFVFICVLSLTPADLAAAKEHNISILSYLANHFNAPVIAWMAPIIAIIAITKSFLGHYLGAREGFNGMVIKSLRGKGKSIEINKLNRITALFMLVTTWIVATLNPSILGMIETLGGPIIAMILFLMPMYAIQKVPAMRKYSGHISNVFVVVMGLIAISAIFYSLFS.

Residues methionine 1 to aspartate 22 are Cytoplasmic-facing. Residues threonine 23–isoleucine 43 traverse the membrane as a helical segment. At asparagine 44–glycine 46 the chain is on the periplasmic side. The helical transmembrane segment at valine 47–alanine 67 threads the bilayer. Topologically, residues histidine 68–lysine 99 are cytoplasmic. A helical transmembrane segment spans residues leucine 100–isoleucine 120. The Periplasmic segment spans residues threonine 121–alanine 140. A helical transmembrane segment spans residues isoleucine 141–isoleucine 161. Over valine 162–lysine 163 the chain is Cytoplasmic. The helical transmembrane segment at alanine 164 to isoleucine 184 threads the bilayer. Residues proline 185–serine 201 are Periplasmic-facing. A helical transmembrane segment spans residues alanine 202–phenylalanine 222. Residues asparagine 223–lysine 249 are Cytoplasmic-facing. The helical transmembrane segment at isoleucine 250–valine 270 threads the bilayer. The Periplasmic segment spans residues leucine 271–asparagine 297. Residues alanine 298 to leucine 318 form a helical membrane-spanning segment. Residues glycine 319–lysine 347 lie on the Cytoplasmic side of the membrane. Residues leucine 348–proline 368 form a helical membrane-spanning segment. Position 369 (serine 369) is a topological domain, periplasmic. The helical transmembrane segment at isoleucine 370–proline 390 threads the bilayer. The Cytoplasmic segment spans residues methionine 391–histidine 406. A helical membrane pass occupies residues isoleucine 407–leucine 427. The Periplasmic segment spans residues phenylalanine 428–serine 429.

The protein belongs to the amino acid/polyamine transporter 2 family. SdaC/TdcC subfamily.

The protein localises to the cell inner membrane. The catalysed reaction is L-serine(in) + H(+)(in) = L-serine(out) + H(+)(out). In terms of biological role, mediates the import of L-serine into the cell. Is energized by proton cotransport. This is Serine transporter SdaC (sdaC) from Shigella flexneri.